The chain runs to 995 residues: S1 RNA-binding domain-containing protein 1 (995 aa).

The segment at 23–78 (SFSELSSASEEDDKEDSAWEPQKKVPRSRKQPPPKESKPKRMPQVKKNAPQISDGS) is disordered. A Glycyl lysine isopeptide (Lys-Gly) (interchain with G-Cter in SUMO2) cross-link involves residue Lys84. Residues 116–132 (TKRKCAAQPHAVRRTKK) are compositionally biased toward basic residues. The interval 116-164 (TKRKCAAQPHAVRRTKKLKVDEETSKASYLEGESNSSETPSTSTVWGGT) is disordered. Lys134 is covalently cross-linked (Glycyl lysine isopeptide (Lys-Gly) (interchain with G-Cter in SUMO2)). Residues 146-159 (EGESNSSETPSTST) show a composition bias toward low complexity. Glycyl lysine isopeptide (Lys-Gly) (interchain with G-Cter in SUMO2) cross-links involve residues Lys166, Lys167, and Lys183. Lys185 is covalently cross-linked (Glycyl lysine isopeptide (Lys-Gly) (interchain with G-Cter in SUMO1); alternate). Residue Lys185 forms a Glycyl lysine isopeptide (Lys-Gly) (interchain with G-Cter in SUMO2); alternate linkage. Positions 258-288 (ADSLREVQQTLEELRAVAKKVHSTIQKIKKE) form a coiled coil. Ser861 is subject to Phosphoserine. In terms of domain architecture, S1 motif spans 919–992 (GTVLTGKVEN…PRSRITLDLI (74 aa)). Lys955 is covalently cross-linked (Glycyl lysine isopeptide (Lys-Gly) (interchain with G-Cter in SUMO2)). Ser964 is subject to Phosphoserine.

This Pongo abelii (Sumatran orangutan) protein is S1 RNA-binding domain-containing protein 1 (SRBD1).